The primary structure comprises 299 residues: Probable lipid kinase YegS (299 aa).

A DAGKc domain is found at 2-133 (AEFPASLLIL…IDMAQVNKQT (132 aa)). ATP-binding positions include T40, 66–72 (GDGTINE), and T95. Mg(2+)-binding residues include L215, D218, and L220. Catalysis depends on E271, which acts as the Proton acceptor.

This sequence belongs to the diacylglycerol/lipid kinase family. YegS lipid kinase subfamily. Mg(2+) serves as cofactor. Ca(2+) is required as a cofactor.

The protein localises to the cytoplasm. In terms of biological role, probably phosphorylates lipids; the in vivo substrate is unknown. The sequence is that of Probable lipid kinase YegS from Shigella flexneri.